The chain runs to 932 residues: MAALQKLPHCRKLVLLCFLLATLWEARAGQIRYSVREEIDRGSFVGNIAKDLGLEPLALAEQGVRIVSRGRSQLFALNPRSGSLVTANRIDREELCAQSAPCLLNFNILLEDKLTIYSVEVEITDINDNAPRFGVEELELKISETTTPGFRIPLKNAHDADVGENALQKYALNPNDHFSLDVRRGADGNKYPELVLERSLDREEEAVHHLVLVASDGGDPVLSGTSRICVKVLDANDNAPVFTQPEYRISIPENTLVGTRILTVTATDADEGYYAQVVYFLEKSPGETSEVFELKSTSGELTIIKDLDYEDATFHEIDIEAQDGPGLLTRAKVIVTVLDVNDNAPEFYMTSATSSVSEDSLPGTIIGLFNVHDRDSGQNAFTTCSLPEDLPFKLEKSVDNYYRLVTTRALDREQFSFYNITLTAKDGGNPSLSTDAHILLQVADINDNAPAFSRTSYSTYIPENNPRGASVFSVTAHDPDSNDNAHVTYSFAEDTVQGAPLSSYISINSDTGVLYALRSFDYEQLRDLQVWVIARDSGNPPLSSNVSLSLFVLDQNDNAPEILYPAFPTDGSTGVELAPRSAEPGYLVTKVVAVDRDSGQNAWLSYHLLKASEPGLFSVGLHTGEVRTARALLDRDALKQSLVVAIQDHGQPPLSATVTLTVAVADRIPDILADLGSLEPSAIPNDSDLTLYLVVAVAAVSCVFLAFVIVLLAHRLRRWHKSRLLQASGGSLTGMQSSHFVGVDGVRAFLQTYSHEVSLTADSRKSHLIFPQPNYADTLISQESCEKKDFLSAPQSLLEEEREETFSQQAPPNTDWRFSQAQRPGTSGSQNGDDTGTWPNNQFDTEMLQAMILASASEAADGSSTLGGGAGTMGLSARYGPQFTLQHVPDYRQNVYIPGSNATLTNAAGKRDGKAPAGGNGNKKKSGKKEKK.

Residues 1 to 28 (MAALQKLPHCRKLVLLCFLLATLWEARA) form the signal peptide. Cadherin domains lie at 29–133 (GQIR…APRF), 134–242 (GVEE…APVF), 243–347 (TQPE…APEF), 348–452 (YMTS…APAF), 453–562 (SRTS…APEI), and 570–682 (DGST…EPSA). Over 29 to 692 (GQIRYSVREE…IPNDSDLTLY (664 aa)) the chain is Extracellular. N419 and N545 each carry an N-linked (GlcNAc...) asparagine glycan. An N-linked (GlcNAc...) asparagine glycan is attached at N685. Residues 693-713 (LVVAVAAVSCVFLAFVIVLLA) form a helical membrane-spanning segment. At 714 to 932 (HRLRRWHKSR…KKKSGKKEKK (219 aa)) the chain is on the cytoplasmic side. 2 disordered regions span residues 798-841 (LEEE…WPNN) and 902-932 (ATLT…KEKK). A compositionally biased stretch (polar residues) spans 806–841 (FSQQAPPNTDWRFSQAQRPGTSGSQNGDDTGTWPNN). A compositionally biased stretch (basic residues) spans 922-932 (NKKKSGKKEKK).

The protein resides in the cell membrane. In terms of biological role, potential calcium-dependent cell-adhesion protein. May be involved in the establishment and maintenance of specific neuronal connections in the brain. This Homo sapiens (Human) protein is Protocadherin gamma-A2 (PCDHGA2).